Reading from the N-terminus, the 202-residue chain is Josephin-1 (202 aa).

Ser-15 carries the post-translational modification Phosphoserine. Residues 23 to 202 (PPQIYHEKQR…EAHQSWRADV (180 aa)) form the Josephin domain. Cys-36 acts as the Nucleophile in catalysis. Residue His-139 is the Proton acceptor of the active site.

Interacts with beta-actin/ACTB. Monoubiquitinated. Ubiquitination activates deubiquitination activity in vitro.

The protein localises to the cell membrane. Its subcellular location is the cytoplasm. The enzyme catalyses Thiol-dependent hydrolysis of ester, thioester, amide, peptide and isopeptide bonds formed by the C-terminal Gly of ubiquitin (a 76-residue protein attached to proteins as an intracellular targeting signal).. Functionally, deubiquitinates monoubiquitinated probes (in vitro). When ubiquitinated, cleaves 'Lys-63'-linked and 'Lys-48'-linked poly-ubiquitin chains (in vitro), hence may act as a deubiquitinating enzyme. May increase macropinocytosis and suppress clathrin- and caveolae-mediated endocytosis. May enhance membrane dynamics and cell motility independently of its catalytic activity. The protein is Josephin-1 (JOSD1) of Bos taurus (Bovine).